A 109-amino-acid chain; its full sequence is Immunity protein CdiI (109 aa).

In terms of assembly, specifically interacts with cognate toxin CdiA, which inhibits the toxin.

Immunity protein component of a toxin-immunity protein module, which functions as a cellular contact-dependent growth inhibition (CDI) system. CDI modules allow bacteria to communicate with and inhibit the growth of closely related neighboring bacteria in a contact-dependent fashion. Neutralizes the toxic activity of cognate toxin CdiA (C-terminal 160 residue CT fragment) upon expression in E.coli. Does not inhibit toxic activity of CdiA from other strains of B.pseudomallei. The chain is Immunity protein CdiI (cdiI) from Burkholderia pseudomallei (Pseudomonas pseudomallei).